A 248-amino-acid polypeptide reads, in one-letter code: Homeobox protein Hox-A4 (248 aa).

Positions Y23–S107 are disordered. Residues Y35–S51 show a composition bias toward basic and acidic residues. The Antp-type hexapeptide motif lies at V128–K133. The homeobox DNA-binding region spans P149–H208. The interval E207 to L248 is disordered. Low complexity predominate over residues S217–Q238.

The protein belongs to the Antp homeobox family. Deformed subfamily.

The protein localises to the nucleus. Functionally, sequence-specific transcription factor which is part of a developmental regulatory system that provides cells with specific positional identities on the anterior-posterior axis. This Morone saxatilis (Striped bass) protein is Homeobox protein Hox-A4 (hoxa4).